Reading from the N-terminus, the 123-residue chain is Large ribosomal subunit protein bL12 (123 aa).

Belongs to the bacterial ribosomal protein bL12 family. Homodimer. Part of the ribosomal stalk of the 50S ribosomal subunit. Forms a multimeric L10(L12)X complex, where L10 forms an elongated spine to which 2 to 4 L12 dimers bind in a sequential fashion. Binds GTP-bound translation factors.

Functionally, forms part of the ribosomal stalk which helps the ribosome interact with GTP-bound translation factors. Is thus essential for accurate translation. This chain is Large ribosomal subunit protein bL12, found in Bartonella bacilliformis (strain ATCC 35685 / KC583 / Herrer 020/F12,63).